The primary structure comprises 309 residues: Serpentine receptor class gamma-47 (309 aa).

5 helical membrane-spanning segments follow: residues 22–42 (IVQM…LFLF), 140–160 (FKLY…VLPL), 190–210 (IYSS…IFYI), 230–250 (LITL…ILMA), and 272–292 (ISSD…DVGI).

Belongs to the nematode receptor-like protein srg family.

The protein resides in the membrane. This is Serpentine receptor class gamma-47 (srg-47) from Caenorhabditis elegans.